The following is a 245-amino-acid chain: tRNA pseudouridine synthase A (245 aa).

Aspartate 52 acts as the Nucleophile in catalysis. Tyrosine 111 lines the substrate pocket.

It belongs to the tRNA pseudouridine synthase TruA family. As to quaternary structure, homodimer.

It catalyses the reaction uridine(38/39/40) in tRNA = pseudouridine(38/39/40) in tRNA. Functionally, formation of pseudouridine at positions 38, 39 and 40 in the anticodon stem and loop of transfer RNAs. The sequence is that of tRNA pseudouridine synthase A from Thermotoga neapolitana (strain ATCC 49049 / DSM 4359 / NBRC 107923 / NS-E).